The following is a 204-amino-acid chain: N-(5'-phosphoribosyl)anthranilate isomerase (204 aa).

This sequence belongs to the TrpF family.

It carries out the reaction N-(5-phospho-beta-D-ribosyl)anthranilate = 1-(2-carboxyphenylamino)-1-deoxy-D-ribulose 5-phosphate. It functions in the pathway amino-acid biosynthesis; L-tryptophan biosynthesis; L-tryptophan from chorismate: step 3/5. This Bacillus mycoides (strain KBAB4) (Bacillus weihenstephanensis) protein is N-(5'-phosphoribosyl)anthranilate isomerase.